Consider the following 77-residue polypeptide: uncharacterized protein (77 aa).

Disordered stretches follow at residues methionine 1–asparagine 34 and leucine 56–arginine 77. Residues aspartate 8–aspartate 20 show a composition bias toward basic and acidic residues. A compositionally biased stretch (basic residues) spans proline 25–asparagine 34. Residues leucine 56 to arginine 70 are compositionally biased toward basic and acidic residues.

This is an uncharacterized protein from Dictyostelium discoideum (Social amoeba).